Here is a 385-residue protein sequence, read N- to C-terminus: 1-deoxy-D-xylulose 5-phosphate reductoisomerase (385 aa).

Positions 10, 11, 12, 13, 36, 38, and 122 each coordinate NADPH. Residue Lys123 participates in 1-deoxy-D-xylulose 5-phosphate binding. Residue Glu124 coordinates NADPH. Residue Asp148 coordinates Mn(2+). Residues Ser149, Glu150, Ser174, and His197 each coordinate 1-deoxy-D-xylulose 5-phosphate. A Mn(2+)-binding site is contributed by Glu150. Gly203 is a binding site for NADPH. Positions 210, 215, 216, and 219 each coordinate 1-deoxy-D-xylulose 5-phosphate. Position 219 (Glu219) interacts with Mn(2+).

It belongs to the DXR family. Requires Mg(2+) as cofactor. The cofactor is Mn(2+).

It carries out the reaction 2-C-methyl-D-erythritol 4-phosphate + NADP(+) = 1-deoxy-D-xylulose 5-phosphate + NADPH + H(+). It functions in the pathway isoprenoid biosynthesis; isopentenyl diphosphate biosynthesis via DXP pathway; isopentenyl diphosphate from 1-deoxy-D-xylulose 5-phosphate: step 1/6. Catalyzes the NADPH-dependent rearrangement and reduction of 1-deoxy-D-xylulose-5-phosphate (DXP) to 2-C-methyl-D-erythritol 4-phosphate (MEP). The chain is 1-deoxy-D-xylulose 5-phosphate reductoisomerase from Geobacter sp. (strain M21).